The primary structure comprises 689 residues: Elongation factor G (689 aa).

One can recognise a tr-type G domain in the interval 9 to 283 (AKFRNIGIMA…AIIEFMPSPL (275 aa)). GTP is bound by residues 18-25 (AHIDAGKT), 82-86 (DTPGH), and 136-139 (NKMD).

This sequence belongs to the TRAFAC class translation factor GTPase superfamily. Classic translation factor GTPase family. EF-G/EF-2 subfamily.

The protein localises to the cytoplasm. Catalyzes the GTP-dependent ribosomal translocation step during translation elongation. During this step, the ribosome changes from the pre-translocational (PRE) to the post-translocational (POST) state as the newly formed A-site-bound peptidyl-tRNA and P-site-bound deacylated tRNA move to the P and E sites, respectively. Catalyzes the coordinated movement of the two tRNA molecules, the mRNA and conformational changes in the ribosome. The polypeptide is Elongation factor G (Clostridium botulinum (strain 657 / Type Ba4)).